Consider the following 152-residue polypeptide: Large ribosomal subunit protein bL9 (152 aa).

The protein belongs to the bacterial ribosomal protein bL9 family.

Binds to the 23S rRNA. The polypeptide is Large ribosomal subunit protein bL9 (Synechococcus elongatus (strain ATCC 33912 / PCC 7942 / FACHB-805) (Anacystis nidulans R2)).